We begin with the raw amino-acid sequence, 219 residues long: Phosphate-specific transport system accessory protein PhoU homolog 1 (219 aa).

This sequence belongs to the PhoU family. In terms of assembly, homodimer.

It localises to the cytoplasm. Its function is as follows. Plays a role in the regulation of phosphate uptake. The chain is Phosphate-specific transport system accessory protein PhoU homolog 1 from Methanothermobacter thermautotrophicus (strain ATCC 29096 / DSM 1053 / JCM 10044 / NBRC 100330 / Delta H) (Methanobacterium thermoautotrophicum).